The chain runs to 487 residues: MAVIVLAAGAGTRMKSTTQKTLHSIGGRTLLSHSLHAAAGIDPARIVAVIGHGREQVGPAVAEVAEQLGRSIDTAIQEQQNGTGHAVQCAMEQLEGFEGTVVVTNADVPLLSPETLQELTATHDGASVTVLSVNQDNPTGYGRILRTNDGMVTAIVEEKDATEKQKEITEVNSGVFAFDAAILRDGLAQLNTDNAQGELYLTDVLSIARRAGHPVRAHIASDAAELAGVNDRVQLAAAGAELNRRTVTAAMRGGATIVDPATTWIDVDVQVGQDVTILPGTQLLGTTTIGDNAQIGPDTTLENVKVGEGAQVVRTHGFDSTIGPRAEVGPFTYIRPGTVLGEEGKLGGFVEAKKANIGRGSKVPHLTYVGDATIGEYSNIGASSVFVNYDGVNKHHTTVGSHVRTGSDSMFIAPVVVGDGAYSGAGTVIKEDVPPGALVVSGGKQRNVEGWVAKKRPGTPAAEAGEAAAKRVAEGGSPTSTPQADQE.

The tract at residues 1–232 is pyrophosphorylase; sequence MAVIVLAAGA…AAELAGVNDR (232 aa). Residues 6-9, Lys-20, Gln-77, and 82-83 each bind UDP-N-acetyl-alpha-D-glucosamine; these read LAAG and GT. Asp-107 contributes to the Mg(2+) binding site. UDP-N-acetyl-alpha-D-glucosamine contacts are provided by Gly-142, Glu-157, Asn-172, and Asn-230. Residue Asn-230 participates in Mg(2+) binding. The tract at residues 233–253 is linker; sequence VQLAAAGAELNRRTVTAAMRG. The tract at residues 254–487 is N-acetyltransferase; that stretch reads GATIVDPATT…PTSTPQADQE (234 aa). Positions 335 and 353 each coordinate UDP-N-acetyl-alpha-D-glucosamine. Residue His-365 is the Proton acceptor of the active site. The UDP-N-acetyl-alpha-D-glucosamine site is built by Tyr-368 and Asn-379. Acetyl-CoA is bound by residues Ala-382, 388–389, Ser-407, and Ala-425; that span reads NY. Positions 453–487 are disordered; that stretch reads AKKRPGTPAAEAGEAAAKRVAEGGSPTSTPQADQE. The span at 477 to 487 shows a compositional bias: polar residues; that stretch reads SPTSTPQADQE.

It in the N-terminal section; belongs to the N-acetylglucosamine-1-phosphate uridyltransferase family. In the C-terminal section; belongs to the transferase hexapeptide repeat family. Homotrimer. It depends on Mg(2+) as a cofactor.

It localises to the cytoplasm. It catalyses the reaction alpha-D-glucosamine 1-phosphate + acetyl-CoA = N-acetyl-alpha-D-glucosamine 1-phosphate + CoA + H(+). It carries out the reaction N-acetyl-alpha-D-glucosamine 1-phosphate + UTP + H(+) = UDP-N-acetyl-alpha-D-glucosamine + diphosphate. It functions in the pathway nucleotide-sugar biosynthesis; UDP-N-acetyl-alpha-D-glucosamine biosynthesis; N-acetyl-alpha-D-glucosamine 1-phosphate from alpha-D-glucosamine 6-phosphate (route II): step 2/2. Its pathway is nucleotide-sugar biosynthesis; UDP-N-acetyl-alpha-D-glucosamine biosynthesis; UDP-N-acetyl-alpha-D-glucosamine from N-acetyl-alpha-D-glucosamine 1-phosphate: step 1/1. The protein operates within bacterial outer membrane biogenesis; LPS lipid A biosynthesis. Its function is as follows. Catalyzes the last two sequential reactions in the de novo biosynthetic pathway for UDP-N-acetylglucosamine (UDP-GlcNAc). The C-terminal domain catalyzes the transfer of acetyl group from acetyl coenzyme A to glucosamine-1-phosphate (GlcN-1-P) to produce N-acetylglucosamine-1-phosphate (GlcNAc-1-P), which is converted into UDP-GlcNAc by the transfer of uridine 5-monophosphate (from uridine 5-triphosphate), a reaction catalyzed by the N-terminal domain. The polypeptide is Bifunctional protein GlmU (Corynebacterium jeikeium (strain K411)).